A 199-amino-acid polypeptide reads, in one-letter code: MSLFGLSLGRLLEALRCLPGVGPKSAQRMAFHLLESDREGGRHLAQALLEALDKMTHCQTCRILSETDLCSLCADSRRDRGQLCVVEMPSDVQAIEQATSYSGRYFVLMGHLSPLDGVGPEALGMDLLAKRLDTDQIREVILATNLTVEGEATAYYISELAQTRGITTTRIAHGVPLGGELEFIDSNTLSHAFQSRRHL.

The segment at 58-73 (CQTCRILSETDLCSLC) adopts a C4-type zinc-finger fold. One can recognise a Toprim domain in the interval 81–176 (GQLCVVEMPS…TTTRIAHGVP (96 aa)).

The protein belongs to the RecR family.

Functionally, may play a role in DNA repair. It seems to be involved in an RecBC-independent recombinational process of DNA repair. It may act with RecF and RecO. This chain is Recombination protein RecR, found in Nitrosococcus oceani (strain ATCC 19707 / BCRC 17464 / JCM 30415 / NCIMB 11848 / C-107).